Consider the following 468-residue polypeptide: WD repeat-containing protein 55 homolog (468 aa).

The segment at 1–107 is disordered; the sequence is MRNFNSPKFG…VPKRVIDDYD (107 aa). Composition is skewed to acidic residues over residues 15-26, 41-58, and 67-91; these read DDSDDDDFDSGT, PITE…EYNP, and SDDE…DGED. WD repeat units lie at residues 134–173, 178–217, 221–259, 262–301, 304–343, and 388–427; these read KTED…CTIV, THTK…LKRF, AHEE…PVFK, EVED…MYVQ, PYEE…YHCD, and QHSL…EFDD.

This sequence belongs to the WD repeat WDR55 family.

The protein is WD repeat-containing protein 55 homolog of Aedes aegypti (Yellowfever mosquito).